Reading from the N-terminus, the 346-residue chain is Phosphoribosylformylglycinamidine cyclo-ligase (346 aa).

Belongs to the AIR synthase family.

Its subcellular location is the cytoplasm. The catalysed reaction is 2-formamido-N(1)-(5-O-phospho-beta-D-ribosyl)acetamidine + ATP = 5-amino-1-(5-phospho-beta-D-ribosyl)imidazole + ADP + phosphate + H(+). Its pathway is purine metabolism; IMP biosynthesis via de novo pathway; 5-amino-1-(5-phospho-D-ribosyl)imidazole from N(2)-formyl-N(1)-(5-phospho-D-ribosyl)glycinamide: step 2/2. In Alteromonas mediterranea (strain DSM 17117 / CIP 110805 / LMG 28347 / Deep ecotype), this protein is Phosphoribosylformylglycinamidine cyclo-ligase.